Consider the following 107-residue polypeptide: MMKVLVVVALLVTLISYSSSEGIDDLEADELLSLMANEQTRKECIPKHHECTSNKHGCCRGNFFKYKCQCTTVVTQDGEQTERCFCGTPPHHKAAELMVGFGKKIFG.

An N-terminal signal peptide occupies residues 1-20 (MMKVLVVVALLVTLISYSSS). A propeptide spanning residues 21 to 41 (EGIDDLEADELLSLMANEQTR) is cleaved from the precursor. 4 disulfide bridges follow: cysteine 44–cysteine 59, cysteine 51–cysteine 68, cysteine 58–cysteine 86, and cysteine 70–cysteine 84.

It belongs to the neurotoxin 19 (CSTX) family. 04 (U1-Lctx) subfamily. Expressed by the venom gland.

Its subcellular location is the secreted. In Lycosa singoriensis (Wolf spider), this protein is U1-lycotoxin-Ls1e.